The sequence spans 344 residues: L-threonine 3-dehydrogenase (344 aa).

Zn(2+) is bound at residue Cys-42. Active-site charge relay system residues include Thr-44 and His-47. Zn(2+)-binding residues include His-67, Glu-68, Cys-97, Cys-100, Cys-103, and Cys-111. Residues Ile-179, Asp-199, Arg-204, 266-268 (LGI), and 290-291 (IY) contribute to the NAD(+) site.

It belongs to the zinc-containing alcohol dehydrogenase family. In terms of assembly, homotetramer. It depends on Zn(2+) as a cofactor.

It is found in the cytoplasm. It catalyses the reaction L-threonine + NAD(+) = (2S)-2-amino-3-oxobutanoate + NADH + H(+). The protein operates within amino-acid degradation; L-threonine degradation via oxydo-reductase pathway; glycine from L-threonine: step 1/2. Catalyzes the NAD(+)-dependent oxidation of L-threonine to 2-amino-3-ketobutyrate. The protein is L-threonine 3-dehydrogenase of Chelativorans sp. (strain BNC1).